An 80-amino-acid polypeptide reads, in one-letter code: Exodeoxyribonuclease 7 small subunit (80 aa).

Belongs to the XseB family. Heterooligomer composed of large and small subunits.

It is found in the cytoplasm. The enzyme catalyses Exonucleolytic cleavage in either 5'- to 3'- or 3'- to 5'-direction to yield nucleoside 5'-phosphates.. Bidirectionally degrades single-stranded DNA into large acid-insoluble oligonucleotides, which are then degraded further into small acid-soluble oligonucleotides. The sequence is that of Exodeoxyribonuclease 7 small subunit from Oleidesulfovibrio alaskensis (strain ATCC BAA-1058 / DSM 17464 / G20) (Desulfovibrio alaskensis).